The chain runs to 344 residues: Endo-1,4-beta-xylanase UM03411 (344 aa).

The first 21 residues, 1–21, serve as a signal peptide directing secretion; sequence MKTNFLVLLSALLAASSAVTA. Residues 35 to 338 enclose the GH10 domain; it reads QRAGSSLNAA…KPAYNAVLST (304 aa). The active-site Proton donor is the glutamate 166. A glycan (N-linked (GlcNAc...) asparagine) is linked at asparagine 171. Glutamate 275 functions as the Nucleophile in the catalytic mechanism. Cysteine 293 and cysteine 299 are oxidised to a cystine. N-linked (GlcNAc...) asparagine glycosylation is found at asparagine 310 and asparagine 323.

Belongs to the glycosyl hydrolase 10 (cellulase F) family.

It localises to the secreted. It carries out the reaction Endohydrolysis of (1-&gt;4)-beta-D-xylosidic linkages in xylans.. The protein operates within glycan degradation; xylan degradation. Functionally, endo-1,4-beta-xylanase involved in the hydrolysis of xylan, a major structural heterogeneous polysaccharide found in plant biomass representing the second most abundant polysaccharide in the biosphere, after cellulose. This Mycosarcoma maydis (Corn smut fungus) protein is Endo-1,4-beta-xylanase UM03411.